The chain runs to 154 residues: SsrA-binding protein (154 aa).

Belongs to the SmpB family.

The protein resides in the cytoplasm. In terms of biological role, required for rescue of stalled ribosomes mediated by trans-translation. Binds to transfer-messenger RNA (tmRNA), required for stable association of tmRNA with ribosomes. tmRNA and SmpB together mimic tRNA shape, replacing the anticodon stem-loop with SmpB. tmRNA is encoded by the ssrA gene; the 2 termini fold to resemble tRNA(Ala) and it encodes a 'tag peptide', a short internal open reading frame. During trans-translation Ala-aminoacylated tmRNA acts like a tRNA, entering the A-site of stalled ribosomes, displacing the stalled mRNA. The ribosome then switches to translate the ORF on the tmRNA; the nascent peptide is terminated with the 'tag peptide' encoded by the tmRNA and targeted for degradation. The ribosome is freed to recommence translation, which seems to be the essential function of trans-translation. This is SsrA-binding protein from Staphylococcus aureus (strain USA300).